The following is a 156-amino-acid chain: ATP synthase subunit b (156 aa).

The helical transmembrane segment at 5-27 (ITLIGQMITFAIFIGFTMKFVWP) threads the bilayer.

This sequence belongs to the ATPase B chain family. F-type ATPases have 2 components, F(1) - the catalytic core - and F(0) - the membrane proton channel. F(1) has five subunits: alpha(3), beta(3), gamma(1), delta(1), epsilon(1). F(0) has three main subunits: a(1), b(2) and c(10-14). The alpha and beta chains form an alternating ring which encloses part of the gamma chain. F(1) is attached to F(0) by a central stalk formed by the gamma and epsilon chains, while a peripheral stalk is formed by the delta and b chains.

Its subcellular location is the cell inner membrane. Functionally, f(1)F(0) ATP synthase produces ATP from ADP in the presence of a proton or sodium gradient. F-type ATPases consist of two structural domains, F(1) containing the extramembraneous catalytic core and F(0) containing the membrane proton channel, linked together by a central stalk and a peripheral stalk. During catalysis, ATP synthesis in the catalytic domain of F(1) is coupled via a rotary mechanism of the central stalk subunits to proton translocation. Component of the F(0) channel, it forms part of the peripheral stalk, linking F(1) to F(0). The polypeptide is ATP synthase subunit b (Francisella tularensis subsp. holarctica (strain OSU18)).